The primary structure comprises 687 residues: Glycine--tRNA ligase beta subunit (687 aa).

The protein belongs to the class-II aminoacyl-tRNA synthetase family. Tetramer of two alpha and two beta subunits.

It is found in the cytoplasm. It catalyses the reaction tRNA(Gly) + glycine + ATP = glycyl-tRNA(Gly) + AMP + diphosphate. This Lactobacillus acidophilus (strain ATCC 700396 / NCK56 / N2 / NCFM) protein is Glycine--tRNA ligase beta subunit.